The sequence spans 567 residues: Low-affinity glucose transporter HXT3 (567 aa).

Residues 1–29 show a composition bias toward polar residues; it reads MNSTPDLISPQKSSENSNADLPSNSSQVM. The interval 1–30 is disordered; it reads MNSTPDLISPQKSSENSNADLPSNSSQVMN. Over 1–57 the chain is Cytoplasmic; that stretch reads MNSTPDLISPQKSSENSNADLPSNSSQVMNMPEEKGVQDDFQAEADQVLTNPNTGKG. Phosphoserine is present on Ser-23. A helical membrane pass occupies residues 58-78; the sequence is AYVTVSICCVMVAFGGFVFGW. The Extracellular portion of the chain corresponds to 79–113; the sequence is DTGTISGFVAQTDFLRRFGMKHKDGSYYLSKVRTG. A helical transmembrane segment spans residues 114-134; sequence LIVSIFNIGCAIGGIILAKLG. Over 135–140 the chain is Cytoplasmic; the sequence is DMYGRK. Residues 141–161 form a helical membrane-spanning segment; the sequence is MGLIVVVVIYIIGIIIQIASI. At 162 to 171 the chain is on the extracellular side; it reads NKWYQYFIGR. A helical membrane pass occupies residues 172–192; sequence IISGLGVGGIAVLSPMLISEV. Over 193 to 198 the chain is Cytoplasmic; it reads APKEMR. Residues 199–219 traverse the membrane as a helical segment; it reads GTLVSCYQLMITLGIFLGYCT. The Extracellular segment spans residues 220–233; sequence NFGTKNYSNSVQWR. Asn-225 carries an N-linked (GlcNAc...) asparagine glycan. The chain crosses the membrane as a helical span at residues 234–254; it reads VPLGLCFAWALFMIGGMTFVP. The Cytoplasmic segment spans residues 255 to 337; it reads ESPRYLVEAG…IQSLQQLTGD (83 aa). The helical transmembrane segment at 338-354 threads the bilayer; it reads NYFFYYGTTVFNAVGMS. The Extracellular portion of the chain corresponds to 355-360; that stretch reads DSFETS. The helical transmembrane segment at 361–378 threads the bilayer; that stretch reads IVFGVVNFFSTCCSLYTV. The Cytoplasmic portion of the chain corresponds to 379-385; that stretch reads DRFGRRN. Residues 386–406 form a helical membrane-spanning segment; the sequence is CLLYGAIGMVCCYVVYASVGV. The Extracellular portion of the chain corresponds to 407–428; the sequence is TRLWPNGEGNGSSKGAGNCMIV. The N-linked (GlcNAc...) asparagine glycan is linked to Asn-416. The chain crosses the membrane as a helical span at residues 429–449; that stretch reads FACFYIFCFATTWAPIAYVVI. The Cytoplasmic segment spans residues 450 to 466; it reads SETFPLRVKSKAMSIAT. Residues 467-487 traverse the membrane as a helical segment; sequence AANWLWGFLIGFFTPFITGAI. Asn-488 is a topological domain (extracellular). The chain crosses the membrane as a helical span at residues 489-509; the sequence is FYYGYVFMGCMVFAYFYVFFF. Over 510–567 the chain is Cytoplasmic; it reads VPETKGLTLEEVNDMYAEGVLPWKSASWVPTSQRGANYDADALMHDDQPFYKKMFGKK.

It belongs to the major facilitator superfamily. Sugar transporter (TC 2.A.1.1) family.

The protein localises to the membrane. Functionally, low-affinity glucose transporter. The chain is Low-affinity glucose transporter HXT3 (HXT3) from Saccharomyces cerevisiae (strain ATCC 204508 / S288c) (Baker's yeast).